A 534-amino-acid chain; its full sequence is Glycerol kinase 5 (534 aa).

Residues Ser-33 and Thr-34 each coordinate ATP. Glycerol-binding residues include Arg-103, Asp-280, and Gln-281. ATP contacts are provided by Thr-302, Gly-345, and Gly-445.

Belongs to the FGGY kinase family. As to expression, expressed predominantly in sebaceous glands.

The protein resides in the cytoplasm. It catalyses the reaction glycerol + ATP = sn-glycerol 3-phosphate + ADP + H(+). The protein operates within polyol metabolism; glycerol degradation via glycerol kinase pathway; sn-glycerol 3-phosphate from glycerol: step 1/1. In terms of biological role, skin-specific kinase that plays a key role in glycerol metabolism, catalyzing its phosphorylation to produce sn-glycerol 3-phosphate. Involved in skin-specific regulation of sterol regulatory element-binding protein (SREBP) processing and lipid biosynthesis. In Mus musculus (Mouse), this protein is Glycerol kinase 5 (Gk5).